Here is a 259-residue protein sequence, read N- to C-terminus: Ferritin-2, chloroplastic (259 aa).

A chloroplast-targeting transit peptide spans 1 to 52; sequence MLLKLAPAFTLLNSHGENLSPMLSTSSQGFVLKNFSTKSRNGLLVVCASKGS. The tract at residues 53-85 is extension peptide (EP); the sequence is NTKPLTGVVFEPFEEVKKELMLVPTVPQVSLAR. Residues 86–239 enclose the Ferritin-like diiron domain; the sequence is HKYSDQCEAA…EYVAQLRRVG (154 aa). The Fe cation site is built by glutamate 103, glutamate 138, histidine 141, and glutamine 221.

Belongs to the ferritin family. Oligomer of 24 subunits. There are two types of subunits: L (light) chain and H (heavy) chain. The major chain can be light or heavy, depending on the species and tissue type. The functional molecule forms a roughly spherical shell with a diameter of 12 nm and contains a central cavity into which the insoluble mineral iron core is deposited.

The protein localises to the plastid. Its subcellular location is the chloroplast. It carries out the reaction 4 Fe(2+) + O2 + 4 H(+) = 4 Fe(3+) + 2 H2O. In terms of biological role, stores iron in a soluble, non-toxic, readily available form. Important for iron homeostasis. Has ferroxidase activity. Iron is taken up in the ferrous form and deposited as ferric hydroxides after oxidation. The chain is Ferritin-2, chloroplastic (FER2) from Nicotiana tabacum (Common tobacco).